The chain runs to 512 residues: Cytochrome P450 76C2 (512 aa).

Residues 3–23 (IIFEQALFPLFCFVLSFFIIF) form a helical membrane-spanning segment. Cysteine 451 contacts heme.

The protein belongs to the cytochrome P450 family. It depends on heme as a cofactor.

It localises to the membrane. This chain is Cytochrome P450 76C2 (CYP76C2), found in Arabidopsis thaliana (Mouse-ear cress).